The primary structure comprises 456 residues: tRNA-2-methylthio-N(6)-dimethylallyladenosine synthase (456 aa).

The MTTase N-terminal domain occupies Lys-9–Ser-126. Positions 18, 55, 89, 163, 167, and 170 each coordinate [4Fe-4S] cluster. The Radical SAM core domain occupies Asp-149–Ala-381. The TRAM domain maps to Arg-384 to Ala-448.

The protein belongs to the methylthiotransferase family. MiaB subfamily. As to quaternary structure, monomer. [4Fe-4S] cluster is required as a cofactor.

The protein resides in the cytoplasm. The enzyme catalyses N(6)-dimethylallyladenosine(37) in tRNA + (sulfur carrier)-SH + AH2 + 2 S-adenosyl-L-methionine = 2-methylsulfanyl-N(6)-dimethylallyladenosine(37) in tRNA + (sulfur carrier)-H + 5'-deoxyadenosine + L-methionine + A + S-adenosyl-L-homocysteine + 2 H(+). In terms of biological role, catalyzes the methylthiolation of N6-(dimethylallyl)adenosine (i(6)A), leading to the formation of 2-methylthio-N6-(dimethylallyl)adenosine (ms(2)i(6)A) at position 37 in tRNAs that read codons beginning with uridine. The chain is tRNA-2-methylthio-N(6)-dimethylallyladenosine synthase from Cellvibrio japonicus (strain Ueda107) (Pseudomonas fluorescens subsp. cellulosa).